The sequence spans 103 residues: Co-chaperonin GroES (103 aa).

The protein belongs to the GroES chaperonin family. Heptamer of 7 subunits arranged in a ring. Interacts with the chaperonin GroEL.

The protein localises to the cytoplasm. In terms of biological role, together with the chaperonin GroEL, plays an essential role in assisting protein folding. The GroEL-GroES system forms a nano-cage that allows encapsulation of the non-native substrate proteins and provides a physical environment optimized to promote and accelerate protein folding. GroES binds to the apical surface of the GroEL ring, thereby capping the opening of the GroEL channel. This is Co-chaperonin GroES from Dinoroseobacter shibae (strain DSM 16493 / NCIMB 14021 / DFL 12).